The primary structure comprises 618 residues: Delta-like protein 3 (618 aa).

An N-terminal signal peptide occupies residues 1-26 (MVSPRMSGLLSQTVILALIFLPQTRP). At 27–492 (AGVFELQIHS…LRPGDPQRYL (466 aa)) the chain is on the extracellular side. Positions 176 to 215 (ARCEPPAVGTACTRLCRPRSAPSRCGPGLRPCAPLEDECE) constitute a DSL domain. EGF-like domains lie at 216–249 (APLV…PLCT), 274–310 (GPGP…LRCE), 312–351 (SGVT…SNCE), 353–389 (RVDR…PRCE), 391–427 (DLDD…RDCR), and 429–465 (RADP…ARCE). 18 cysteine pairs are disulfide-bonded: Cys220/Cys231, Cys224/Cys237, Cys239/Cys248, Cys278/Cys289, Cys283/Cys298, Cys300/Cys309, Cys316/Cys327, Cys321/Cys339, Cys341/Cys350, Cys357/Cys368, Cys362/Cys377, Cys379/Cys388, Cys395/Cys406, Cys400/Cys415, Cys417/Cys426, Cys433/Cys444, Cys438/Cys453, and Cys455/Cys464. The chain crosses the membrane as a helical span at residues 493–513 (LPPALGLLVAAGVAGAALLLV). At 514–618 (HVRRRGHSQD…PYPSSILSVK (105 aa)) the chain is on the cytoplasmic side. Polar residues predominate over residues 546–562 (NLRTQEGSGDGPSSSVD). Residues 546-566 (NLRTQEGSGDGPSSSVDWNRP) form a disordered region.

As to quaternary structure, can bind and activate Notch-1 or another Notch receptor. In terms of processing, ubiquitinated by MIB (MIB1 or MIB2), leading to its endocytosis and subsequent degradation.

Its subcellular location is the membrane. In terms of biological role, inhibits primary neurogenesis. May be required to divert neurons along a specific differentiation pathway. Plays a role in the formation of somite boundaries during segmentation of the paraxial mesoderm. This Homo sapiens (Human) protein is Delta-like protein 3 (DLL3).